We begin with the raw amino-acid sequence, 67 residues long: Small ribosomal subunit protein eS31 (67 aa).

Residues cysteine 31, cysteine 34, cysteine 49, and cysteine 52 each coordinate Zn(2+). The C4-type zinc-finger motif lies at 31–52; the sequence is CPKCGAGVFMAEHLNRFACGKC.

This sequence belongs to the eukaryotic ribosomal protein eS31 family. In terms of assembly, part of the 30S ribosomal subunit. Zn(2+) is required as a cofactor.

In Methanococcus maripaludis (strain C7 / ATCC BAA-1331), this protein is Small ribosomal subunit protein eS31.